A 480-amino-acid polypeptide reads, in one-letter code: Beta-amyrin 28-monooxygenase (480 aa).

Residues 3–23 (VFFLSLLLICVLSVSIRLYLL) traverse the membrane as a helical segment. Residue C427 participates in heme binding.

This sequence belongs to the cytochrome P450 family. Heme serves as cofactor. Expressed in leaves, stems and fruit skin.

The protein resides in the membrane. It carries out the reaction beta-amyrin + 3 reduced [NADPH--hemoprotein reductase] + 3 O2 = oleanolate + 3 oxidized [NADPH--hemoprotein reductase] + 4 H2O + 4 H(+). In terms of biological role, catalyzes the carboxylation of beta-amyrin at the C-28 position to form oleanolic acid. May be involved in saponin biosynthesis in fruit skin. The polypeptide is Beta-amyrin 28-monooxygenase (Vitis vinifera (Grape)).